The chain runs to 345 residues: Ryncolin-1 (345 aa).

Positions 1 to 19 are cleaved as a signal peptide; the sequence is MKPWAAFHLIFLVASSLEG. Residues 48–118 form a disordered region; that stretch reads ILQSQPGIPG…DKGDKGEDCN (71 aa). Residues 57 to 114 form the Collagen-like domain; the sequence is GIPGVPGTNGSEGLKGDPGPQGPPGIRGPDGIRGEAGPKGDKGDQGDKGDKGDKGDKG. Over residues 86-116 the composition is skewed to basic and acidic residues; the sequence is DGIRGEAGPKGDKGDQGDKGDKGDKGDKGED. The Fibrinogen C-terminal domain occupies 121 to 339; the sequence is GCLPTEVRNC…YADMKIRPQQ (219 aa). 2 cysteine pairs are disulfide-bonded: Cys130–Cys158 and Cys282–Cys295.

This sequence belongs to the ficolin lectin family. Veficolin subfamily. Hydroxylated, possibly at Pro-80. In terms of tissue distribution, expressed by the venom duct.

Its subcellular location is the secreted. Functionally, initiates complement activation and/or interferes in platelet aggregation and/or blood coagulation. This is Ryncolin-1 from Cerberus rynchops (Dog-faced water snake).